Here is a 1150-residue protein sequence, read N- to C-terminus: Voltage-dependent calcium channel subunit alpha-2/delta-2 (1150 aa).

The N-terminal stretch at M1–T18 is a signal peptide. Residues M1–P41 are disordered. Residues A19 to G1113 lie on the Extracellular side of the membrane. The VWFA domain occupies D291 to L469. Positions 297, 299, and 301 each coordinate a divalent metal cation. The MIDAS-like motif motif lies at D297–S301. N-linked (GlcNAc...) asparagine glycosylation is found at N386, N418, N507, N540, N624, and N861. Residues C443 and C1098 are joined by a disulfide bond. Residues W485 to P574 enclose the Cache domain. Residues A1114–L1134 traverse the membrane as a helical segment. Residues P1135 to L1150 lie on the Cytoplasmic side of the membrane.

It belongs to the calcium channel subunit alpha-2/delta family. Dimer formed of alpha-2-2 and delta-2 chains; disulfide-linked. Voltage-dependent calcium channels are multisubunit complexes, consisting of alpha-1 (CACNA1), alpha-2 (CACNA2D), beta (CACNB) and delta (CACNA2D) subunits in a 1:1:1:1 ratio. Post-translationally, may be proteolytically processed into subunits alpha-2-2 and delta-2 that are disulfide-linked. It is however unclear whether such cleavage really takes place in vivo and has a functional role. Predominantly present in cerebellar cortex. Present in various lung tumor cell lines, while it is absent in normal lung (at protein level). Highly expressed in heart, lung, testis, pancreas and skeletal muscle. Also expressed in kidney, liver, placenta and brain.

It is found in the membrane. In terms of biological role, the alpha-2/delta subunit of voltage-dependent calcium channels regulates calcium current density and activation/inactivation kinetics of the calcium channel. Acts as a regulatory subunit for P/Q-type calcium channel (CACNA1A), N-type (CACNA1B), L-type (CACNA1C OR CACNA1D) and possibly T-type (CACNA1G). Overexpression induces apoptosis. The polypeptide is Voltage-dependent calcium channel subunit alpha-2/delta-2 (CACNA2D2) (Homo sapiens (Human)).